A 1186-amino-acid chain; its full sequence is Probable inactive serine/threonine-protein kinase DDB_G0293184 (1186 aa).

The span at 1-12 (MEQEDQQYEEDS) shows a compositional bias: acidic residues. Disordered stretches follow at residues 1 to 55 (MEQE…NNDS) and 99 to 122 (MEQQ…NTNF). Low complexity-rich tracts occupy residues 34-48 (TTTE…TTPT) and 99-110 (MEQQQQQQHLQP). One can recognise a Protein kinase domain in the interval 173–437 (YESPPTLGKY…VHDLLRHPWL (265 aa)). ATP-binding positions include 179-187 (LGKYDKVIL) and K205. Disordered stretches follow at residues 447–468 (SSSS…GNVN) and 530–551 (YNNY…NECG). The segment covering 453–468 (QAHPTVQSNNLNGNVN) has biased composition (polar residues). Over residues 530-545 (YNNYNNNNNNNNNTND) the composition is skewed to low complexity. A coiled-coil region spans residues 631–659 (LKRTNQMANDLGRKYEILQSNIKRLEDYL). The span at 766–784 (NNLDPSNNNESVNLSTSPG) shows a compositional bias: polar residues. Disordered regions lie at residues 766-911 (NNLD…NGNN) and 959-988 (ENKK…GDVS). Low complexity predominate over residues 785 to 836 (SLVNSNSNPSISNSLNNNNNNNNNNNNNNNGNPNVIITTNNNCNSNSNGNNI). A compositionally biased stretch (basic and acidic residues) spans 847 to 896 (KEVKEGKEIKEIKEPKEKDKDKEKDKDKEKDKDKEKDKDKEKEKDKDKEN). The stretch at 875–909 (EKDKDKEKDKDKEKEKDKDKENNNNNNSNNNNNNG) forms a coiled coil. Residues 897–911 (NNNNNSNNNNNNGNN) show a composition bias toward low complexity. A compositionally biased stretch (polar residues) spans 969-978 (LDSTNKQSPG). The Rho-GAP domain maps to 1004 to 1186 (VRLDDLMTRE…LSFPKFNLSV (183 aa)).

Belongs to the protein kinase superfamily. STE Ser/Thr protein kinase family.

The chain is Probable inactive serine/threonine-protein kinase DDB_G0293184 from Dictyostelium discoideum (Social amoeba).